A 1051-amino-acid polypeptide reads, in one-letter code: SWI/SNF-related matrix-associated actin-dependent regulator of chromatin subfamily A member 5 (1051 aa).

Pro residues predominate over residues 1-15 (MSSAVEPPPPPPPES). The disordered stretch occupies residues 1 to 81 (MSSAVEPPPP…IQEPDPTYEE (81 aa)). N-acetylserine is present on serine 2. Over residues 24–38 (GAGGSSSGNKGGPEG) the composition is skewed to gly residues. Low complexity predominate over residues 39–53 (GAAPAAPCAAGSGPA). The residue at position 55 (threonine 55) is a Phosphothreonine. Residue serine 65 is modified to Phosphoserine. Residues 68–81 (KQKEIQEPDPTYEE) are compositionally biased toward basic and acidic residues. Lysine 82 participates in a covalent cross-link: Glycyl lysine isopeptide (Lys-Gly) (interchain with G-Cter in SUMO2). Threonine 112 is subject to Phosphothreonine. Phosphoserine occurs at positions 115, 136, and 170. The Helicase ATP-binding domain occupies 191–356 (ISLYENGING…WSLLNFLLPD (166 aa)). 204 to 211 (DEMGLGKT) contacts ATP. A DEAH box motif is present at residues 307 to 310 (DEAH). Lysine 439 carries the post-translational modification N6-acetyllysine. Residues 486–637 (VLDKLLPKLK…SIVIQQGRLV (152 aa)) form the Helicase C-terminal domain. Residues lysine 643, lysine 646, lysine 693, lysine 721, and lysine 734 each participate in a glycyl lysine isopeptide (Lys-Gly) (interchain with G-Cter in SUMO2) cross-link. A Phosphoserine modification is found at serine 754. 2 SANT domains span residues 839–891 (QGFT…ERCN) and 942–1006 (KGKN…LITL). Residue lysine 965 forms a Glycyl lysine isopeptide (Lys-Gly) (interchain with G-Cter in SUMO2) linkage. Residues 1014–1051 (LEEKEKAEKKKRGPKPSTQKRKMDGAPDGRGRKKKLKL) form a disordered region. Basic residues predominate over residues 1022–1033 (KKKRGPKPSTQK). A compositionally biased stretch (basic and acidic residues) spans 1034–1043 (RKMDGAPDGR).

The protein belongs to the SNF2/RAD54 helicase family. ISWI subfamily. In terms of assembly, component of the ACF-5 ISWI chromatin-remodeling complex (also called the ACF/WCRF complex) at least composed of SMARCA5/SNF2H and BAZ1A/ACF1, which regulates the spacing of histone octamers on the DNA template to facilitate access to DNA. Within the complex interacts with BAZ1A/ACF1; the interaction is direct and is required to slide nucleosomes from end to center positions on a DNA template in an ATP-dependent manner. Component of the CHRAC ISWI chromatin-remodeling complex at least composed of SMARCA5/SNF2H, BAZ1A/ACF1, CHRAC1 and POLE3; the complex preferentially binds DNA through the CHRAC1-POLE3 heterodimer and possesses ATP-dependent nucleosome-remodeling activity. Within the complex interacts with BAZ1A/ACF1; the interaction is direct and promotes the interaction with the POLE3-CHRAC1 heterodimer. Within the complex interacts with the POLE3-CHRAC1 heterodimer; the interaction is direct and enhances nucleosome sliding activity by the SMARCA5/SNF2H and BAZ1A/ACF1 interaction. Neither POLE3 nor CHRAC1 enhances nucleosome sliding activity of the ACF-5 ISWI chromatin remodeling complex. Component of the WICH-5 ISWI chromatin-remodeling complex (also called the WICH complex) at least composed of SMARCA5/SNF2H and BAZ1B/WSTF, which regulates the spacing of histone octamers on the DNA template to facilitate access to DNA. Within the complex interacts with BAZ1B/WSTF. Component of the NoRC-5 ISWI chromatin-remodeling complex (also called the NoRC chromatin-remodeling complex) at least composed of SMARCA5/SNF2H and BAZ2A/TIP5; the complex suppresses rDNA transcription by a combination of nucleosome remodeling, histone deacetylation, and DNA methylation. Within the complex interacts with BAZ2A/TIP5. Within the complex interacts with HDAC1. Component of the BRF-5 ISWI chromatin-remodeling complex at least composed of SMARCA5/SNF2H and BAZ2B. Within the complex interacts with BAZ2B. Component of the NURF-5 ISWI chromatin-remodeling complex at least composed of SMARCA5/SNF2H and BPTF. Within the complex interacts with BPFT. Component of the CERF-5 ISWI chromatin-remodeling complex at least composed of SMARCA5/SNF2H and CECR2. LUZP1 is detected as part of the CERF-5 complex in embryonic stem cells where it is involved in complex stabilization but is not detected in the complex in the testis. Component of the RSF-5 ISWI chromatin-remodeling complex (also called the RSF complex) at least composed of SMARCA5/SNF2H and RSF1. Within the complex interacts with RSF1. Interacts with the cohesin complex component RAD21; the interaction is direct. Interacts with the NuRD complex components HDAC2, RBBP4 and CHD4; the interactions are direct. Interacts with PCNA. Component of the B-WICH complex, at least composed of SMARCA5/SNF2H, BAZ1B/WSTF, SF3B1, DEK, MYO1C, ERCC6, MYBBP1A and DDX21 which positively regulates RNA polymerase III transcription. Interacts with MYO1C. Interacts with BEND3. Interacts with SIRT6; promoting recruitment to DNA damage sites. As to expression, ubiquitously expressed.

Its subcellular location is the nucleus. It localises to the chromosome. The enzyme catalyses ATP + H2O = ADP + phosphate + H(+). ATPase that possesses intrinsic ATP-dependent nucleosome-remodeling activity. Catalytic subunit of ISWI chromatin-remodeling complexes, which form ordered nucleosome arrays on chromatin and facilitate access to DNA during DNA-templated processes such as DNA replication, transcription, and repair; this may require intact histone H4 tails. Within the ISWI chromatin-remodeling complexes, slides edge- and center-positioned histone octamers away from their original location on the DNA template. Catalytic activity and histone octamer sliding propensity is regulated and determined by components of the ISWI chromatin-remodeling complexes. The BAZ1A/ACF1-, BAZ1B/WSTF-, BAZ2A/TIP5- and BAZ2B-containing ISWI chromatin-remodeling complexes regulate the spacing of nucleosomes along the chromatin and have the ability to slide mononucleosomes to the center of a DNA template in an ATP-dependent manner. The CECR2- and RSF1-containing ISWI chromatin-remodeling complexes do not have the ability to slide mononucleosomes to the center of a DNA template. Binds to core histones together with RSF1, and is required for the assembly of regular nucleosome arrays by the RSF-5 ISWI chromatin-remodeling complex. Involved in DNA replication and together with BAZ1A/ACF1 is required for replication of pericentric heterochromatin in S-phase. Probably plays a role in repression of RNA polymerase I dependent transcription of the rDNA locus, through the recruitment of the SIN3/HDAC1 corepressor complex to the rDNA promoter. The WICH-5 ISWI chromatin-remodeling complex regulates the transcription of various genes, has a role in RNA polymerase I and RNA polymerase III transcription, mediates the histone H2AX phosphorylation at 'Tyr-142', and is involved in the maintenance of chromatin structures during DNA replication processes. Essential component of the NoRC-5 ISWI chromatin-remodeling complex, a complex that mediates silencing of a fraction of rDNA by recruiting histone-modifying enzymes and DNA methyltransferases, leading to heterochromatin formation and transcriptional silencing. Required for embryonic development and differentiation, and the proliferation of early blastocyst-derived stem cells. The polypeptide is SWI/SNF-related matrix-associated actin-dependent regulator of chromatin subfamily A member 5 (Smarca5) (Mus musculus (Mouse)).